A 99-amino-acid polypeptide reads, in one-letter code: NADH-quinone oxidoreductase subunit K (99 aa).

3 consecutive transmembrane segments (helical) span residues 3 to 23 (ILFS…GILI), 28 to 48 (LIVF…FVAF), and 59 to 79 (IWVF…LAII).

Belongs to the complex I subunit 4L family. As to quaternary structure, NDH-1 is composed of 14 different subunits. Subunits NuoA, H, J, K, L, M, N constitute the membrane sector of the complex.

It is found in the cell inner membrane. The catalysed reaction is a quinone + NADH + 5 H(+)(in) = a quinol + NAD(+) + 4 H(+)(out). In terms of biological role, NDH-1 shuttles electrons from NADH, via FMN and iron-sulfur (Fe-S) centers, to quinones in the respiratory chain. The immediate electron acceptor for the enzyme in this species is believed to be ubiquinone. Couples the redox reaction to proton translocation (for every two electrons transferred, four hydrogen ions are translocated across the cytoplasmic membrane), and thus conserves the redox energy in a proton gradient. This chain is NADH-quinone oxidoreductase subunit K, found in Protochlamydia amoebophila (strain UWE25).